Here is a 396-residue protein sequence, read N- to C-terminus: THAP domain-containing protein 5 (396 aa).

The THAP-type zinc finger occupies 2-85 (MPRYCAAICC…LKQTAVPTIF (84 aa)). Residues 86 to 113 (SLPEDNQGKDPSKKKSQKKNLEDEKEVC) are disordered. Basic and acidic residues predominate over residues 91–113 (NQGKDPSKKKSQKKNLEDEKEVC). Residues 322–325 (EHSY) carry the HCFC1-binding motif (HBM) motif. Residues 349–382 (LELKEQQTLGRLKSLEALVRQLKQENWLSEENVK) adopt a coiled-coil conformation.

In terms of assembly, interacts with HTRA2; under apoptotic conditions. Interacts with ABRAXAS2. In terms of processing, cleaved by HTRA2 during apoptosis.

It is found in the nucleus. In terms of biological role, has sequence-specific DNA-binding activity and can function as transcriptional repressor (in vitro). May be a regulator of cell cycle: THAP5 overexpression in human cell lines causes cell cycle arrest at G2/M phase. The chain is THAP domain-containing protein 5 (THAP5) from Macaca fascicularis (Crab-eating macaque).